Consider the following 106-residue polypeptide: Large ribosomal subunit protein eL42 (106 aa).

Residues 1-29 (MVNIPKTRRTYCKGKACRKHTPHKVTQYK) are compositionally biased toward basic residues. Positions 1–56 (MVNIPKTRRTYCKGKACRKHTPHKVTQYKKGKDSLSAQGKRRYDRKQSGYGGQTKP) are disordered.

It belongs to the eukaryotic ribosomal protein eL42 family.

The polypeptide is Large ribosomal subunit protein eL42 (RPL44) (Cryptococcus neoformans var. neoformans serotype D (strain B-3501A) (Filobasidiella neoformans)).